We begin with the raw amino-acid sequence, 274 residues long: Shikimate dehydrogenase (NADP(+)) (274 aa).

Shikimate contacts are provided by residues 14-16 (SQS) and T61. K65 (proton acceptor) is an active-site residue. The shikimate site is built by N86 and D102. Residues 128–132 (GAGGA), 151–156 (NRTVEK), and L215 each bind NADP(+). Shikimate is bound at residue Y217. An NADP(+)-binding site is contributed by G239.

The protein belongs to the shikimate dehydrogenase family. Homodimer.

It catalyses the reaction shikimate + NADP(+) = 3-dehydroshikimate + NADPH + H(+). It participates in metabolic intermediate biosynthesis; chorismate biosynthesis; chorismate from D-erythrose 4-phosphate and phosphoenolpyruvate: step 4/7. In terms of biological role, involved in the biosynthesis of the chorismate, which leads to the biosynthesis of aromatic amino acids. Catalyzes the reversible NADPH linked reduction of 3-dehydroshikimate (DHSA) to yield shikimate (SA). The polypeptide is Shikimate dehydrogenase (NADP(+)) (Proteus mirabilis (strain HI4320)).